Here is a 125-residue protein sequence, read N- to C-terminus: Small ribosomal subunit protein uS12 (125 aa).

The disordered stretch occupies residues 1–24 (MPTISQLVRKPRKAKRTKSKVPAL). The span at 9–19 (RKPRKAKRTKS) shows a compositional bias: basic residues. The residue at position 89 (Asp-89) is a 3-methylthioaspartic acid. Residues 101 to 125 (SLDTAGVKDRKQARSKYGSKRPKSA) form a disordered region. Positions 113-125 (ARSKYGSKRPKSA) are enriched in basic residues.

The protein belongs to the universal ribosomal protein uS12 family. As to quaternary structure, part of the 30S ribosomal subunit. Contacts proteins S8 and S17. May interact with IF1 in the 30S initiation complex.

Functionally, with S4 and S5 plays an important role in translational accuracy. In terms of biological role, interacts with and stabilizes bases of the 16S rRNA that are involved in tRNA selection in the A site and with the mRNA backbone. Located at the interface of the 30S and 50S subunits, it traverses the body of the 30S subunit contacting proteins on the other side and probably holding the rRNA structure together. The combined cluster of proteins S8, S12 and S17 appears to hold together the shoulder and platform of the 30S subunit. The sequence is that of Small ribosomal subunit protein uS12 from Nitrosomonas europaea (strain ATCC 19718 / CIP 103999 / KCTC 2705 / NBRC 14298).